Here is a 1216-residue protein sequence, read N- to C-terminus: ATP-dependent DNA helicase Q4 (1216 aa).

2 disordered regions span residues 72–100 (EAQEPSCWGPHLSRAATQNTQSMPKQSLL) and 113–171 (NLKN…PRLG). Polar residues-rich tracts occupy residues 86 to 100 (AATQNTQSMPKQSLL) and 114 to 137 (LKNTTQTGPTQSRKLQLQKRSLST). Phosphoserine is present on residues S179 and S181. Residues 235–340 (SEVSVQSPEA…LHASPRPASL (106 aa)) are disordered. 2 stretches are compositionally biased toward polar residues: residues 248–262 (QPAQVLSQSPKSINS) and 306–320 (TQVNVPQPCNSSNQA). The CCHC-type zinc-finger motif lies at 393 to 410 (DTCFRCGQFGHWASQCSQ). Residues 436–458 (AQRTGTASCHHSGEETQPAAPEL) form a disordered region. One can recognise a Helicase ATP-binding domain in the interval 506-684 (IMRILSGIST…AQHLGIAGEF (179 aa)). 519 to 526 (LPTGAGKS) contacts ATP. The DEAH box motif lies at 627 to 630 (DEVH). The 168-residue stretch at 705–872 (DSDQALVTLL…AVKRLVQRVF (168 aa)) folds into the Helicase C-terminal domain. Residues C875, C877, C906, and H909 each contribute to the Zn(2+) site.

It belongs to the helicase family. RecQ subfamily. As to quaternary structure, interacts with UBR1 and UBR2. Interacts with MCM10; this interaction regulates RECQL4 unwinding activity. Interacts with TOPBP1. It depends on Zn(2+) as a cofactor.

The protein localises to the cytoplasm. It localises to the nucleus. It catalyses the reaction Couples ATP hydrolysis with the unwinding of duplex DNA by translocating in the 3'-5' direction.. The enzyme catalyses ATP + H2O = ADP + phosphate + H(+). Functionally, an ATP-dependent DNA helicase which unwinds dsDNA with a 3'-overhang in a 3'-5' direction. May play a role in development of the palate and the limbs. May modulate chromosome segregation. This chain is ATP-dependent DNA helicase Q4 (Recql4), found in Mus musculus (Mouse).